The following is a 359-amino-acid chain: Small ribosomal subunit protein mS22 (359 aa).

The disordered stretch occupies residues R40–K65. A Phosphoserine modification is found at S54. Residue K210 is modified to N6-acetyllysine.

This sequence belongs to the mitochondrion-specific ribosomal protein mS22 family. Component of the mitochondrial ribosome small subunit (28S) which comprises a 12S rRNA and about 30 distinct proteins.

The protein resides in the mitochondrion. The polypeptide is Small ribosomal subunit protein mS22 (Mrps22) (Mus musculus (Mouse)).